Here is a 176-residue protein sequence, read N- to C-terminus: RNA polymerase sigma factor SigO (176 aa).

The short motif at 30–43 (DARSLDELFKQFYK) is the Polymerase core binding element. Residues 139–158 (MQEIADSLGESRQNISNIHK) constitute a DNA-binding region (H-T-H motif).

It belongs to the sigma-70 factor family. In terms of assembly, interacts with RNA polymerase.

Its function is as follows. Sigma factors are initiation factors that promote the attachment of RNA polymerase to specific initiation sites and are then released. Together with its coactivator RsoA, positively regulates the expression of at least three operons, including oxdC-yvrL, sigO-rsoA and yvrJ. Required for the acid stress-dependent induction of the oxalate decarboxylase oxdC. The protein is RNA polymerase sigma factor SigO (sigO) of Bacillus subtilis (strain 168).